Consider the following 513-residue polypeptide: Tigger transposable element-derived protein 4 (513 aa).

Residues 12-63 (PVTVKKKKSLSIEEKIDIINAVESGKKKAEIAAEYGIKKNSLSSIMKNKDKV) enclose the HTH psq-type domain. 2 DNA-binding regions (H-T-H motif) span residues 39-59 (KAEI…IMKN) and 108-139 (PMLR…FKSR). One can recognise an HTH CENPB-type domain in the interval 75 to 146 (KRKRLRTAFY…KSRYGLVFRA (72 aa)). In terms of domain architecture, DDE-1 spans 174 to 375 (YHPKNVFNVK…VTPETIVKSY (202 aa)). The segment covering 433–448 (TQKDDAEWAGESKQDE) has biased composition (basic and acidic residues). The disordered stretch occupies residues 433–473 (TQKDDAEWAGESKQDETGLYTSDEEEEDSGALEVDLPSPSK).

The protein belongs to the tigger transposable element derived protein family.

It localises to the nucleus. The protein is Tigger transposable element-derived protein 4 (Tigd4) of Mus musculus (Mouse).